The following is a 1084-amino-acid chain: Myosin heavy chain, skeletal muscle (1084 aa).

Disordered regions lie at residues 1-20 (SAETEKEMANMKEEFEKTKE), 270-292 (EIEAERASRAKAEKQRSDLSREL), and 298-317 (RLEEAGGATSAQIEMNKKRE). The interval 1-258 (SAETEKEMAN…SKIEDEQALM (258 aa)) is alpha-helical tailpiece (S2). The segment at 259–1084 (TNLQRIEELE…DVHSKVISEE (826 aa)) is rodlike tail (S2 and LMM domains). Residues 273-292 (AERASRAKAEKQRSDLSREL) show a composition bias toward basic and acidic residues. Positions 455–1084 (QAFTQQIEGL…DVHSKVISEE (630 aa)) form a coiled coil.

As to quaternary structure, muscle myosin is a hexameric protein that consists of 2 heavy chain subunits (MHC), 2 alkali light chain subunits (MLC) and 2 regulatory light chain subunits (MLC-2).

The protein resides in the cytoplasm. The protein localises to the myofibril. Muscle contraction. This chain is Myosin heavy chain, skeletal muscle, found in Oryctolagus cuniculus (Rabbit).